Reading from the N-terminus, the 341-residue chain is Acetylpolyamine amidohydrolase (341 aa).

Tyr19, Glu106, and Glu117 together coordinate substrate. His159 (proton donor/acceptor) is an active-site residue. The Zn(2+) site is built by Asp195, His197, and Asp284. Tyr323 contributes to the substrate binding site.

Belongs to the histone deacetylase family. In terms of assembly, homodimer. The cofactor is Zn(2+).

It carries out the reaction N-acetylputrescine + H2O = putrescine + acetate. The catalysed reaction is N-acetylcadaverine + H2O = cadaverine + acetate. The enzyme catalyses N(1)-acetylspermine + H2O = spermine + acetate. It catalyses the reaction N(1)-acetylspermidine + H2O = spermidine + acetate. It carries out the reaction N(8)-acetylspermidine + H2O = spermidine + acetate. Its pathway is amine and polyamine metabolism. With respect to regulation, zinc ions inhibit enzyme activity in a dose-dependent manner. Inhibited by KCl at concentrations above 10 mM. Inhibited by o-oxyquinoline in vitro, suggesting that it is a metalloprotein. Inhibited by various substrate N(8)-acetylspermidine analogs bearing different metal-binding groups such as trifluoromethylketone, thiol, or hydroxamate, and by hydroxamate analogs of short-chain acetyldiamines. In terms of biological role, involved in polyamine metabolism. Catalyzes the deacetylation of various acetylated polyamines such as N-acetylputrescine, N-acetylcadaverine, N(1)-acetylspermine, N(1)-acetylspermidine and N(8)-acetylspermidine. In vitro, is also able to deacetylate L-Lys(epsilon-acetyl)coumarin, but has very low activity towards the larger tetrapeptide N-acetyl-L-Arg-L-His-L-Lys(epsilon-acetyl)-L-Lys(epsilon-acetyl)coumarin. The protein is Acetylpolyamine amidohydrolase of Mycoplana ramosa (Mycoplana bullata).